The following is a 706-amino-acid chain: Polyribonucleotide nucleotidyltransferase (706 aa).

Mg(2+) is bound by residues Asp486 and Asp492. Residues Pro553 to Ile612 enclose the KH domain. In terms of domain architecture, S1 motif spans Asn622 to Lys690.

Belongs to the polyribonucleotide nucleotidyltransferase family. Component of the RNA degradosome, which is a multiprotein complex involved in RNA processing and mRNA degradation. It depends on Mg(2+) as a cofactor.

The protein localises to the cytoplasm. It catalyses the reaction RNA(n+1) + phosphate = RNA(n) + a ribonucleoside 5'-diphosphate. In terms of biological role, involved in mRNA degradation. Catalyzes the phosphorolysis of single-stranded polyribonucleotides processively in the 3'- to 5'-direction. In Yersinia enterocolitica serotype O:8 / biotype 1B (strain NCTC 13174 / 8081), this protein is Polyribonucleotide nucleotidyltransferase.